The chain runs to 93 residues: YcgL domain-containing protein VFMJ11_1829 (93 aa).

The region spanning Met-1–Lys-84 is the YcgL domain.

In Aliivibrio fischeri (strain MJ11) (Vibrio fischeri), this protein is YcgL domain-containing protein VFMJ11_1829.